The following is a 219-amino-acid chain: Dehydration-responsive element-binding protein 1F (219 aa).

Residues 1 to 45 (MDTEDTSSASSSSVSPPSSPGGGHHHRLPPKRRAGRKKFRETRHP) are disordered. A compositionally biased stretch (low complexity) spans 7–16 (SSASSSSVSP). A compositionally biased stretch (basic residues) spans 23–41 (GHHHRLPPKRRAGRKKFRE). Residues 46–105 (VYRGVRARAGGSRWVCEVREPQAQARIWLGTYPTPEMAARAHDVAAIALRGERGAELNFP) constitute a DNA-binding region (AP2/ERF). A disordered region spans residues 134-161 (RRPPPPLALPEDPQEGTSGGGATATSGR).

This sequence belongs to the AP2/ERF transcription factor family. ERF subfamily. In terms of tissue distribution, mostly expressed in developing seeds and apices.

The protein localises to the nucleus. In terms of biological role, transcriptional activator that binds specifically to the DNA sequence 5'-[AG]CCGAC-3'. Binding to the C-repeat/DRE element mediates high salinity- and dehydration-inducible transcription. The sequence is that of Dehydration-responsive element-binding protein 1F (DREB1F) from Oryza sativa subsp. indica (Rice).